The chain runs to 223 residues: Urease accessory protein UreF (223 aa).

Belongs to the UreF family. As to quaternary structure, ureD, UreF and UreG form a complex that acts as a GTP-hydrolysis-dependent molecular chaperone, activating the urease apoprotein by helping to assemble the nickel containing metallocenter of UreC. The UreE protein probably delivers the nickel.

It is found in the cytoplasm. Required for maturation of urease via the functional incorporation of the urease nickel metallocenter. This chain is Urease accessory protein UreF, found in Rhizobium johnstonii (strain DSM 114642 / LMG 32736 / 3841) (Rhizobium leguminosarum bv. viciae).